We begin with the raw amino-acid sequence, 201 residues long: Interferon-induced transmembrane protein 10 (201 aa).

2 disordered regions span residues 1 to 23 (MAQG…DGTQ) and 60 to 88 (AAPA…KTDS). Residues 1-127 (MAQGPSQCPA…PDTTEVNDYY (127 aa)) lie on the Extracellular side of the membrane. Pro residues predominate over residues 63–73 (APEPSASPPMA). The helical transmembrane segment at 128–148 (LWSIFNFVYLNFCCLGFIALA) threads the bilayer. 2 S-palmitoyl cysteine lipidation sites follow: C140 and C141. At 149–173 (YSLKVRDKKLLNDLNGAVEDAKTAR) the chain is on the cytoplasmic side. A helical membrane pass occupies residues 174 to 194 (LFNITSSALAASCIILIFIFL). At 195-201 (RYPLTDY) the chain is on the extracellular side.

This sequence belongs to the CD225/Dispanin family.

The protein resides in the cell membrane. This chain is Interferon-induced transmembrane protein 10 (Ifitm10), found in Mus musculus (Mouse).